The primary structure comprises 161 residues: NADH-quinone oxidoreductase subunit C (161 aa).

This sequence belongs to the complex I 30 kDa subunit family. NDH-1 is composed of 14 different subunits. Subunits NuoB, C, D, E, F, and G constitute the peripheral sector of the complex.

The protein resides in the cell inner membrane. It carries out the reaction a quinone + NADH + 5 H(+)(in) = a quinol + NAD(+) + 4 H(+)(out). Functionally, NDH-1 shuttles electrons from NADH, via FMN and iron-sulfur (Fe-S) centers, to quinones in the respiratory chain. The immediate electron acceptor for the enzyme in this species is believed to be ubiquinone. Couples the redox reaction to proton translocation (for every two electrons transferred, four hydrogen ions are translocated across the cytoplasmic membrane), and thus conserves the redox energy in a proton gradient. This is NADH-quinone oxidoreductase subunit C from Citrifermentans bemidjiense (strain ATCC BAA-1014 / DSM 16622 / JCM 12645 / Bem) (Geobacter bemidjiensis).